A 266-amino-acid polypeptide reads, in one-letter code: Movement protein (266 aa).

A compositionally biased stretch (basic residues) spans 212 to 227 (KTKKGKKRKKEKKKRV). The segment at 212-266 (KTKKGKKRKKEKKKRVVGNSVNNKKINNSGKKGLKVEEIEDNVSDDESIASSSTF) is disordered. Over residues 228-242 (VGNSVNNKKINNSGK) the composition is skewed to low complexity. Over residues 249 to 259 (EIEDNVSDDES) the composition is skewed to acidic residues.

It belongs to the tobamovirus movement protein family.

It localises to the host cytoplasm. Its subcellular location is the host cytoskeleton. The protein localises to the host cell junction. It is found in the host plasmodesma. In terms of biological role, transports viral genome to neighboring plant cells directly through plasmosdesmata, without any budding. The movement protein allows efficient cell to cell propagation, by bypassing the host cell wall barrier. Forms a ribonucleoprotein complex with viral RNA. Binds microtubules and modulates microtubule stability. Can bind double-stranded DNA. The sequence is that of Movement protein (MP) from Capsicum annuum (Capsicum pepper).